Consider the following 493-residue polypeptide: Lysine--tRNA ligase (493 aa).

Mg(2+)-binding residues include glutamate 403 and glutamate 410.

This sequence belongs to the class-II aminoacyl-tRNA synthetase family. In terms of assembly, homodimer. Mg(2+) is required as a cofactor.

The protein localises to the cytoplasm. It catalyses the reaction tRNA(Lys) + L-lysine + ATP = L-lysyl-tRNA(Lys) + AMP + diphosphate. In Wigglesworthia glossinidia brevipalpis, this protein is Lysine--tRNA ligase.